Here is a 576-residue protein sequence, read N- to C-terminus: Rop guanine nucleotide exchange factor 13 (576 aa).

Residues 119-485 form the PRONE domain; that stretch reads KSCYFAYVTE…QLTQNPELAM (367 aa). Over residues 557–570 the composition is skewed to polar residues; the sequence is KTTYLESLGTTRSP. Residues 557–576 are disordered; that stretch reads KTTYLESLGTTRSPTAGRYS.

As to quaternary structure, interacts with PRK6. As to expression, specifically expressed in mature flowers.

Its function is as follows. Guanine-nucleotide exchange factor (GEF) that acts as an activator of Rop (Rho of plants) GTPases by promoting the exchange of GDP for GTP. The protein is Rop guanine nucleotide exchange factor 13 of Arabidopsis thaliana (Mouse-ear cress).